Here is a 316-residue protein sequence, read N- to C-terminus: 4-hydroxy-3-methylbut-2-enyl diphosphate reductase (316 aa).

Cys-12 serves as a coordination point for [4Fe-4S] cluster. His-41 and His-74 together coordinate (2E)-4-hydroxy-3-methylbut-2-enyl diphosphate. The dimethylallyl diphosphate site is built by His-41 and His-74. The isopentenyl diphosphate site is built by His-41 and His-74. [4Fe-4S] cluster is bound at residue Cys-96. Residue His-124 coordinates (2E)-4-hydroxy-3-methylbut-2-enyl diphosphate. His-124 is a dimethylallyl diphosphate binding site. Residue His-124 participates in isopentenyl diphosphate binding. The Proton donor role is filled by Glu-126. Thr-169 contributes to the (2E)-4-hydroxy-3-methylbut-2-enyl diphosphate binding site. Cys-199 is a binding site for [4Fe-4S] cluster. Residues Ser-227, Ser-228, Asn-229, and Ser-271 each coordinate (2E)-4-hydroxy-3-methylbut-2-enyl diphosphate. Dimethylallyl diphosphate is bound by residues Ser-227, Ser-228, Asn-229, and Ser-271. Positions 227, 228, 229, and 271 each coordinate isopentenyl diphosphate.

The protein belongs to the IspH family. [4Fe-4S] cluster serves as cofactor.

The enzyme catalyses isopentenyl diphosphate + 2 oxidized [2Fe-2S]-[ferredoxin] + H2O = (2E)-4-hydroxy-3-methylbut-2-enyl diphosphate + 2 reduced [2Fe-2S]-[ferredoxin] + 2 H(+). It catalyses the reaction dimethylallyl diphosphate + 2 oxidized [2Fe-2S]-[ferredoxin] + H2O = (2E)-4-hydroxy-3-methylbut-2-enyl diphosphate + 2 reduced [2Fe-2S]-[ferredoxin] + 2 H(+). The protein operates within isoprenoid biosynthesis; dimethylallyl diphosphate biosynthesis; dimethylallyl diphosphate from (2E)-4-hydroxy-3-methylbutenyl diphosphate: step 1/1. It functions in the pathway isoprenoid biosynthesis; isopentenyl diphosphate biosynthesis via DXP pathway; isopentenyl diphosphate from 1-deoxy-D-xylulose 5-phosphate: step 6/6. Its function is as follows. Catalyzes the conversion of 1-hydroxy-2-methyl-2-(E)-butenyl 4-diphosphate (HMBPP) into a mixture of isopentenyl diphosphate (IPP) and dimethylallyl diphosphate (DMAPP). Acts in the terminal step of the DOXP/MEP pathway for isoprenoid precursor biosynthesis. The protein is 4-hydroxy-3-methylbut-2-enyl diphosphate reductase of Xylella fastidiosa (strain M12).